A 132-amino-acid chain; its full sequence is Insulin-like 3 (132 aa).

The signal sequence occupies residues 1 to 21 (MDRRPLTWALVLLGPALAIAL). Q27 is subject to Pyrrolidone carboxylic acid. Intrachain disulfides connect C34–C117, C46–C130, and C116–C121. Positions 67–104 (LLRWLEGQHLLHGLMASGDPVLVLAPQPLPQASRHHHH) are cleaved as a propeptide — c peptide like.

Belongs to the insulin family. Heterodimer of a B chain and an A chain linked by two disulfide bonds. 20% of B chains include an extra N-terminal pentapeptide. In terms of tissue distribution, expressed exclusively in Leydig cells of the testis.

It is found in the secreted. Seems to play a role in testicular function. May be a trophic hormone with a role in testicular descent in fetal life. Is a ligand for LGR8 receptor. This is Insulin-like 3 (INSL3) from Bos taurus (Bovine).